A 164-amino-acid chain; its full sequence is Large ribosomal subunit protein bL9 (164 aa).

It belongs to the bacterial ribosomal protein bL9 family.

Binds to the 23S rRNA. This Borrelia recurrentis (strain A1) protein is Large ribosomal subunit protein bL9.